The sequence spans 144 residues: uncharacterized protein (144 aa).

A run of 4 helical transmembrane segments spans residues 16–36, 48–68, 87–107, and 120–140; these read FLIF…GAIF, GFIV…ALII, LLPE…LVLL, and VMSL…WYFG.

It localises to the cell membrane. This is an uncharacterized protein from Methanocaldococcus jannaschii (strain ATCC 43067 / DSM 2661 / JAL-1 / JCM 10045 / NBRC 100440) (Methanococcus jannaschii).